The chain runs to 160 residues: SsrA-binding protein (160 aa).

The disordered stretch occupies residues 133-160 (KKEHDKREDLKEREWQRDKERMMKNKGR).

Belongs to the SmpB family.

The protein resides in the cytoplasm. In terms of biological role, required for rescue of stalled ribosomes mediated by trans-translation. Binds to transfer-messenger RNA (tmRNA), required for stable association of tmRNA with ribosomes. tmRNA and SmpB together mimic tRNA shape, replacing the anticodon stem-loop with SmpB. tmRNA is encoded by the ssrA gene; the 2 termini fold to resemble tRNA(Ala) and it encodes a 'tag peptide', a short internal open reading frame. During trans-translation Ala-aminoacylated tmRNA acts like a tRNA, entering the A-site of stalled ribosomes, displacing the stalled mRNA. The ribosome then switches to translate the ORF on the tmRNA; the nascent peptide is terminated with the 'tag peptide' encoded by the tmRNA and targeted for degradation. The ribosome is freed to recommence translation, which seems to be the essential function of trans-translation. In Tolumonas auensis (strain DSM 9187 / NBRC 110442 / TA 4), this protein is SsrA-binding protein.